A 395-amino-acid polypeptide reads, in one-letter code: ATP synthase subunit beta, chloroplastic (395 aa).

ATP is bound at residue 72–79 (GGAGVGKT).

It belongs to the ATPase alpha/beta chains family. F-type ATPases have 2 components, CF(1) - the catalytic core - and CF(0) - the membrane proton channel. CF(1) has five subunits: alpha(3), beta(3), gamma(1), delta(1), epsilon(1). CF(0) has four main subunits: a(1), b(1), b'(1) and c(9-12).

The protein resides in the plastid. It localises to the chloroplast thylakoid membrane. It catalyses the reaction ATP + H2O + 4 H(+)(in) = ADP + phosphate + 5 H(+)(out). In terms of biological role, produces ATP from ADP in the presence of a proton gradient across the membrane. The catalytic sites are hosted primarily by the beta subunits. The polypeptide is ATP synthase subunit beta, chloroplastic (Blechnum occidentale (Hammock fern)).